A 276-amino-acid polypeptide reads, in one-letter code: MDGPAIITQVTNPKEDEGRLPGAGEKASQCNVSLKKQRSRSILSSFFCCFRDYNVEAPPPSSPSVLPPLVEENGGLQKGDQRQVIPIPSPPAKYLLPEVTVLDYGKKCVVIDLDETLVHSSFKPISNADFIVPVEIDGTIHQVYVLKRPHVDEFLQRMGQLFECVLFTASLAKYADPVADLLDRWGVFRARLFRESCVFHRGNYVKDLSRLGRELSKVIIVDNSPASYIFHPENAVPVQSWFDDMTDTELLDLIPFFEGLSREDDVYSMLHRLCNR.

The tract at residues 1–25 is disordered; that stretch reads MDGPAIITQVTNPKEDEGRLPGAGE. In terms of domain architecture, FCP1 homology spans 102–260; sequence LDYGKKCVVI…LDLIPFFEGL (159 aa). Asp112 acts as the 4-aspartylphosphate intermediate in catalysis. Mg(2+) contacts are provided by Asp112, Asp114, and Asn223. The active-site Proton donor is the Asp114.

In terms of assembly, interacts with REST. Monomer. Mg(2+) is required as a cofactor. In terms of tissue distribution, expression is restricted to non-neuronal tissues.

Its subcellular location is the nucleus. The enzyme catalyses O-phospho-L-seryl-[protein] + H2O = L-seryl-[protein] + phosphate. It carries out the reaction O-phospho-L-threonyl-[protein] + H2O = L-threonyl-[protein] + phosphate. Functionally, recruited by REST to neuronal genes that contain RE-1 elements, leading to neuronal gene silencing in non-neuronal cells. Preferentially catalyzes the dephosphorylation of 'Ser-5' within the tandem 7 residue repeats in the C-terminal domain (CTD) of the largest RNA polymerase II subunit POLR2A. Negatively regulates RNA polymerase II transcription, possibly by controlling the transition from initiation/capping to processive transcript elongation. This is CTD small phosphatase-like protein (CTDSPL) from Homo sapiens (Human).